We begin with the raw amino-acid sequence, 378 residues long: E3 ubiquitin-protein ligase ATL9 (378 aa).

The signal sequence occupies residues 1–33 (MAILDTKSSRWIPHNLLFLLLLLLLQSVPYGFG). A helical membrane pass occupies residues 51 to 71 (VVVVITVLFLVIFFMVFGSIF). Residues 135–177 (CAVCLCEFEDDETLRLMPPCCHVFHADCVDVWLSEHSTCPLCR) form an RING-type; atypical zinc finger. 3 disordered regions span residues 187-211 (DDDDSTESYSGTDPGTISSSTDPER), 300-326 (ARSSRSGYRSGSVGSERSAFPYGRKSN), and 350-378 (FSGDAPKNLPTSIEAGERSFERLRPDERV). A compositionally biased stretch (polar residues) spans 193 to 207 (ESYSGTDPGTISSST). The span at 301 to 317 (RSSRSGYRSGSVGSERS) shows a compositional bias: low complexity. Residues 364–378 (AGERSFERLRPDERV) are compositionally biased toward basic and acidic residues.

The protein belongs to the RING-type zinc finger family. ATL subfamily.

The protein resides in the membrane. The enzyme catalyses S-ubiquitinyl-[E2 ubiquitin-conjugating enzyme]-L-cysteine + [acceptor protein]-L-lysine = [E2 ubiquitin-conjugating enzyme]-L-cysteine + N(6)-ubiquitinyl-[acceptor protein]-L-lysine.. Its pathway is protein modification; protein ubiquitination. E3 ubiquitin-protein ligase able to catalyze polyubiquitination with ubiquitin-conjugating enzyme E2 UBC8 in vitro. May be involved in the early steps of the plant defense signaling pathway. The polypeptide is E3 ubiquitin-protein ligase ATL9 (ATL9) (Arabidopsis thaliana (Mouse-ear cress)).